The primary structure comprises 162 residues: MPKEKARPGETLIARNKRAGFNYDLGDRFEAGIVLKGSEVKMLRAGKADLTDSFCTVLRGEVFLHGVSIAAMASAAFGHVPKGARKLLLHRREIERIDLSIAREGMTAVATRLYFKSGLAKVEIALARGKKSHDKRETIKEQDAEREMRAVVVHGQRGYGRA.

Belongs to the SmpB family.

The protein resides in the cytoplasm. Functionally, required for rescue of stalled ribosomes mediated by trans-translation. Binds to transfer-messenger RNA (tmRNA), required for stable association of tmRNA with ribosomes. tmRNA and SmpB together mimic tRNA shape, replacing the anticodon stem-loop with SmpB. tmRNA is encoded by the ssrA gene; the 2 termini fold to resemble tRNA(Ala) and it encodes a 'tag peptide', a short internal open reading frame. During trans-translation Ala-aminoacylated tmRNA acts like a tRNA, entering the A-site of stalled ribosomes, displacing the stalled mRNA. The ribosome then switches to translate the ORF on the tmRNA; the nascent peptide is terminated with the 'tag peptide' encoded by the tmRNA and targeted for degradation. The ribosome is freed to recommence translation, which seems to be the essential function of trans-translation. The polypeptide is SsrA-binding protein (Sorangium cellulosum (strain So ce56) (Polyangium cellulosum (strain So ce56))).